Consider the following 630-residue polypeptide: tRNA uridine 5-carboxymethylaminomethyl modification enzyme MnmG (630 aa).

13–18 contacts FAD; that stretch reads GGGHAG. Residue 273–287 participates in NAD(+) binding; the sequence is GPRYCPSIEDKVNRF.

The protein belongs to the MnmG family. Homodimer. Heterotetramer of two MnmE and two MnmG subunits. The cofactor is FAD.

It is found in the cytoplasm. In terms of biological role, NAD-binding protein involved in the addition of a carboxymethylaminomethyl (cmnm) group at the wobble position (U34) of certain tRNAs, forming tRNA-cmnm(5)s(2)U34. The chain is tRNA uridine 5-carboxymethylaminomethyl modification enzyme MnmG from Saccharophagus degradans (strain 2-40 / ATCC 43961 / DSM 17024).